Here is a 331-residue protein sequence, read N- to C-terminus: Phosphoribosylformylglycinamidine cyclo-ligase (331 aa).

Belongs to the AIR synthase family.

The protein localises to the cytoplasm. The catalysed reaction is 2-formamido-N(1)-(5-O-phospho-beta-D-ribosyl)acetamidine + ATP = 5-amino-1-(5-phospho-beta-D-ribosyl)imidazole + ADP + phosphate + H(+). Its pathway is purine metabolism; IMP biosynthesis via de novo pathway; 5-amino-1-(5-phospho-D-ribosyl)imidazole from N(2)-formyl-N(1)-(5-phospho-D-ribosyl)glycinamide: step 2/2. This is Phosphoribosylformylglycinamidine cyclo-ligase from Clostridium botulinum (strain Langeland / NCTC 10281 / Type F).